Reading from the N-terminus, the 192-residue chain is MSIQNEMPGYDEMNRFLNQQGAGLTPAEMHGLISGMICGGNNDSSWQPLLHDLTNEGLAFGHELAQALRKMHAATSDALEDDGFLFQLYLPEGDDVSVFDRADALAGWVNHFLLGLGVTQPKLDKVTGETGEAIDDLRNIAQLGYDESEDQEELEMSLEEIIEYVRVAALLCHDTFTRQQPTAPEVRKPTLH.

The protein belongs to the UPF0149 family.

The protein is UPF0149 protein YgfB of Salmonella typhi.